The following is a 351-amino-acid chain: Nicotinate-nucleotide--dimethylbenzimidazole phosphoribosyltransferase (351 aa).

Residue glutamate 317 is the Proton acceptor of the active site.

The protein belongs to the CobT family.

The catalysed reaction is 5,6-dimethylbenzimidazole + nicotinate beta-D-ribonucleotide = alpha-ribazole 5'-phosphate + nicotinate + H(+). The protein operates within nucleoside biosynthesis; alpha-ribazole biosynthesis; alpha-ribazole from 5,6-dimethylbenzimidazole: step 1/2. In terms of biological role, catalyzes the synthesis of alpha-ribazole-5'-phosphate from nicotinate mononucleotide (NAMN) and 5,6-dimethylbenzimidazole (DMB). This chain is Nicotinate-nucleotide--dimethylbenzimidazole phosphoribosyltransferase, found in Pseudomonas fluorescens (strain SBW25).